The following is an 81-amino-acid chain: Cytotoxin 1 (81 aa).

An N-terminal signal peptide occupies residues 1-21 (MKTLLLTLVVVTIVCLDLGYT). Disulfide bonds link C24/C42, C35/C59, C63/C74, and C75/C80.

The protein belongs to the three-finger toxin family. Short-chain subfamily. Type IA cytotoxin sub-subfamily. In terms of assembly, monomer in solution; homodimer and oligomer in the presence of negatively charged lipids forming a pore with a size ranging between 20 and 30 Angstroms. In terms of tissue distribution, expressed by the venom gland.

The protein resides in the secreted. It localises to the target cell membrane. In terms of biological role, shows cytolytic activity on many different cells by forming pores in lipid membranes. Exhibits concentration-dependent growth inhibitory effects in the lung cell lines A549 (IC(50)= 0.88) and NL20 (IC(50)= 1.91), in the prostate cell lines PC-3 (IC(50)= 3.13 ug/ml) and RWPE-1 (IC(50)=0.35 ug/ml), and in the breast cell lines MCF-7 (IC(50)= 9.10 ug/ml) and 184B5 (IC(50)=6.21 ug/ml), with high selectivity for the lung cancer cell line A549 (selectivity index=2.17). Induces primarily necrosis in the A549 lung cancer cell line, and mainly caspase-independent late apoptosis in the breast cancer cells line MCF-7 and in the prostate cancer cell line PC-3. The polypeptide is Cytotoxin 1 (Naja sumatrana (Equatorial spitting cobra)).